The following is a 473-amino-acid chain: Thermostable beta-glucosidase B (473 aa).

The active-site Proton donor is E196. E378 serves as the catalytic Nucleophile.

Belongs to the glycosyl hydrolase 1 family.

Its subcellular location is the cytoplasm. It carries out the reaction Hydrolysis of terminal, non-reducing beta-D-glucosyl residues with release of beta-D-glucose.. This is Thermostable beta-glucosidase B (bglB) from Thermobispora bispora (Microbispora bispora).